The chain runs to 432 residues: G-protein coupled receptor 22 (432 aa).

The Cytoplasmic portion of the chain corresponds to 1–45 (MCFSPVLEINMQSESNVTVRDDIEDIDTNMYQPLSYPLSFQVSLT). A helical transmembrane segment spans residues 46–66 (GFLMLEIVLGLGSNLTVLVLY). Over 67–85 (CMKSNLISSVSNIITMNLH) the chain is Extracellular. Residues 86–106 (VLDVIICVGCIPLTIVILLLS) form a helical membrane-spanning segment. Over 107–115 (LERNTALIC) the chain is Cytoplasmic. The chain crosses the membrane as a helical span at residues 116–136 (CFHEACVSFASVSTAINVFAI). The Extracellular segment spans residues 137–156 (TLDRYDISVKPANRILTMGR). A helical transmembrane segment spans residues 157–177 (AVMLMTSIWIFSFFSFLIPFI). Residues 178–208 (EVNFFSLQSGNAWENKTLLCVSTSEYYTELG) lie on the Cytoplasmic side of the membrane. Residues 209–229 (MYYHLLVQIPIFFFTVIVMLI) form a helical membrane-spanning segment. The Extracellular portion of the chain corresponds to 230–314 (TYTKILQALN…ERQKRVFKMS (85 aa)). Residues 315–335 (LLIISTFLLCWTPISVLNTTI) traverse the membrane as a helical segment. At 336–348 (LCLGPSDLLVKLR) the chain is on the cytoplasmic side. The helical transmembrane segment at 349–369 (LCFLVMAYGTTIFHPLLYAFT) threads the bilayer. Residues 370-432 (RQKFQKVLKS…KCLVPQVVTD (63 aa)) lie on the Extracellular side of the membrane.

It belongs to the G-protein coupled receptor 1 family. Abundant levels detected in the brain. High expression in the heart (at protein level). No detectable expression in other peripheral tissues.

The protein resides in the cell membrane. Orphan G-protein coupled receptor. Seems to act through a G(i)/G(o) mediated pathway. May be involved in ciliogenesis. This Rattus norvegicus (Rat) protein is G-protein coupled receptor 22.